We begin with the raw amino-acid sequence, 146 residues long: Large ribosomal subunit protein uL15 (146 aa).

The tract at residues 1–53 is disordered; the sequence is MILSNLKPVPGARHSKKRLGRGPGSGTGKTSGKGHKGQKARSGGGVRPGFEGG. Gly residues-rich tracts occupy residues 21–31 and 42–52; these read RGPGSGTGKTS and SGGGVRPGFEG.

It belongs to the universal ribosomal protein uL15 family. In terms of assembly, part of the 50S ribosomal subunit.

Its function is as follows. Binds to the 23S rRNA. The chain is Large ribosomal subunit protein uL15 from Acholeplasma laidlawii (strain PG-8A).